We begin with the raw amino-acid sequence, 344 residues long: MLQKISQSISLCNGDQFKPLIYLAGAPTNFISSPLSGKKKSSSLRIKRIQQLQSTLEDRINPPLVCGTVSPRLSVPDHILKPLYVESSKVPEISSELQIPDSIGIVKMKKACELAARVLDYAGTLVRPFVTTDEIDKAVHQMVIEFGAYPSPLGYGGFPKSVCTSVNECMFHGIPDSRPLQNGDIINIDVAVYLDGYHGDTSKTFLCGDVNGSLKQLVKVTEECLEKGISVCKDGASFKQIGKIISEHAAKYGYNMERFIGHGVGTVLHSEPLIYLHSNYDYELEYMIEGQTFTLEPILTIGTTEFVTWPDKWTIVTADGGPAAQFEHTILITTTGAEILTISS.

Histidine 172 is a substrate binding site. 3 residues coordinate a divalent metal cation: aspartate 189, aspartate 200, and histidine 262. Substrate is bound at residue histidine 269. Positions 296 and 327 each coordinate a divalent metal cation.

It belongs to the peptidase M24A family. Methionine aminopeptidase type 1 subfamily. Requires Co(2+) as cofactor. Zn(2+) is required as a cofactor. Mn(2+) serves as cofactor. It depends on Fe(2+) as a cofactor. Ubiquitous.

The protein localises to the plastid. The protein resides in the chloroplast. It localises to the mitochondrion. It catalyses the reaction Release of N-terminal amino acids, preferentially methionine, from peptides and arylamides.. Removes the N-terminal methionine from nascent proteins. The N-terminal methionine is often cleaved when the second residue in the primary sequence is small and uncharged (Met-Ala-, Cys, Gly, Pro, Ser, Thr, or Val). This is Methionine aminopeptidase 1C, chloroplastic/mitochondrial (MAP1C) from Arabidopsis thaliana (Mouse-ear cress).